An 81-amino-acid polypeptide reads, in one-letter code: MSTSGQPPALKKYMDKQLQINLKANRMIVGTLRGFDQFMNLVVDNTVEVNGNEKNDIGMVVIRGNSVVTVEALEPVVNRIG.

A Sm domain is found at 5 to 76 (GQPPALKKYM…VVTVEALEPV (72 aa)).

This sequence belongs to the snRNP Sm proteins family.

The protein resides in the nucleus. Its function is as follows. Probable common Sm protein, is found in U1 and U2 snRNPs and may be part of the spliceosome. The polypeptide is Probable small nuclear ribonucleoprotein G (C29) (Medicago sativa (Alfalfa)).